The sequence spans 1059 residues: MPKRKDIQKIMVIGSGPIVIGQAAEFDYAGTQACLSLKEEGYSVVLVNSNPATIMTDKEIADRVYIEPITLEFVARILRKERPDALLPTLGGQTGLNMAMELSKSGLLEELGVELLGTKLSAIDQAEDRDLFKQLMEELGQPIPESEIVNTVDEALEFAAGIGYPVIVRPAFTLGGTGGGICSNEGELQEIAENGLKISPVTQCLIERSIAGFKEIEYEVMRDGADNALVVCNMENFDPVGIHTGDSIVFAPSQTISDYEYQMLRDASLKIIRALKIEGGCNVQLALDPNSFKYYVIEVNPRVSRSSALASKATGYPIAKLAAKIAVGLTLDEIINPVTGSTYAMFEPALDYVVAKIPRFPFDKFEHGERRLGTQMKATGEVMAIGRNIEESLLKACRSLEVGVDHNELPALSQVSDDELMRKIVKVQDDRLFYISEAIRRGYSPDEIAELTKIDVFFLDKLLHIYEIEQELASHIGDSYVLKKAKQNGFADTKIATLWDMTAQQVRRIRQDQKIMPVYKMVDTCAAEFESATPYFYSTYGFENESVKSSKESVLVLGSGPIRIGQGVEFDYATVHSVKAIQAAGYEAIIMNSNPETVSTDFSVSDKLYFEPLTFEDVMNVIDLEQPKGVIVQFGGQTAINLAEPLSKAGVKILGTQVADLDRAEDRDLFEQALKELDIPQPPGQTATNEEEAIEAARKIGFPVLVRPSYVLGGRAMEIVENEADLRSYMRTAVKASPDHPVLVDSYIVGDECEVDAISDGRQVLIPGIMEHIERAGVHSGDSMAAYPPQTLSQKVKDTIADYTKRLALGLNCIGMMNIQFVIKDEQVYVIEVNPRASRTVPFLSKVTDIPMAQVATRLILGETLAELDYEDGLHPESFMVHIKAPVFSFSKLAKVDSLLGPEMKSTGEVMGSDRTLEKALYKAFEASYLHLPNFGNVVFTIADDSKEEALQLAQRFANIGYGIWATKGTASYFENHGLHVRLVEKIGSDDDKDIPAYIRKGKIQAIINTVGTKRTADKHGQIIRSSAIEHGVPLFTALDTADAMLKVLESRSFTTEAI.

A carboxyphosphate synthetic domain region spans residues 1-401; the sequence is MPKRKDIQKI…SLLKACRSLE (401 aa). ATP-binding residues include R129, R169, G175, G176, R208, I210, E215, G241, I242, H243, Q284, and E298. In terms of domain architecture, ATP-grasp 1 spans 133–327; sequence KQLMEELGQP…IAKLAAKIAV (195 aa). Q284, E298, and N300 together coordinate Mg(2+). Mn(2+)-binding residues include Q284, E298, and N300. The tract at residues 402 to 546 is oligomerization domain; that stretch reads VGVDHNELPA…YSTYGFENES (145 aa). The interval 547–929 is carbamoyl phosphate synthetic domain; sequence VKSSKESVLV…ALYKAFEASY (383 aa). In terms of domain architecture, ATP-grasp 2 spans 671-861; that stretch reads EQALKELDIP…MAQVATRLIL (191 aa). ATP is bound by residues R707, S746, I748, E752, G777, V778, H779, S780, Q820, and E832. Mg(2+) contacts are provided by Q820, E832, and N834. The Mn(2+) site is built by Q820, E832, and N834. Residues 930–1059 form the MGS-like domain; sequence LHLPNFGNVV…ESRSFTTEAI (130 aa). The segment at 930 to 1059 is allosteric domain; that stretch reads LHLPNFGNVV…ESRSFTTEAI (130 aa).

It belongs to the CarB family. As to quaternary structure, composed of two chains; the small (or glutamine) chain promotes the hydrolysis of glutamine to ammonia, which is used by the large (or ammonia) chain to synthesize carbamoyl phosphate. Tetramer of heterodimers (alpha,beta)4. Mg(2+) is required as a cofactor. The cofactor is Mn(2+).

The enzyme catalyses hydrogencarbonate + L-glutamine + 2 ATP + H2O = carbamoyl phosphate + L-glutamate + 2 ADP + phosphate + 2 H(+). It carries out the reaction hydrogencarbonate + NH4(+) + 2 ATP = carbamoyl phosphate + 2 ADP + phosphate + 2 H(+). Its pathway is amino-acid biosynthesis; L-arginine biosynthesis; carbamoyl phosphate from bicarbonate: step 1/1. It participates in pyrimidine metabolism; UMP biosynthesis via de novo pathway; (S)-dihydroorotate from bicarbonate: step 1/3. Functionally, large subunit of the glutamine-dependent carbamoyl phosphate synthetase (CPSase). CPSase catalyzes the formation of carbamoyl phosphate from the ammonia moiety of glutamine, carbonate, and phosphate donated by ATP, constituting the first step of 2 biosynthetic pathways, one leading to arginine and/or urea and the other to pyrimidine nucleotides. The large subunit (synthetase) binds the substrates ammonia (free or transferred from glutamine from the small subunit), hydrogencarbonate and ATP and carries out an ATP-coupled ligase reaction, activating hydrogencarbonate by forming carboxy phosphate which reacts with ammonia to form carbamoyl phosphate. The protein is Carbamoyl phosphate synthase large chain of Streptococcus gordonii (strain Challis / ATCC 35105 / BCRC 15272 / CH1 / DL1 / V288).